Reading from the N-terminus, the 582-residue chain is Putative frv operon regulatory protein (582 aa).

Positions 20 to 39 (PGELAQQTGVSGRTILRDID) form a DNA-binding region, H-T-H motif. The region spanning 443-582 (RFFSAPGSFH…EAFMELLHKG (140 aa)) is the PTS EIIA type-2 domain. His-505 carries the post-translational modification Phosphohistidine; by HPr.

In terms of biological role, could be involved in the regulation of the transcription of the FRV operon. The polypeptide is Putative frv operon regulatory protein (frvR) (Escherichia coli (strain K12)).